The following is a 284-amino-acid chain: Probable 3-mercaptopyruvate sulfurtransferase (284 aa).

Rhodanese domains follow at residues 17–138 and 168–281; these read SEPD…ALTN and GQPG…RPVA. Position 182 (Arg-182) interacts with substrate. Cys-241 serves as the catalytic Cysteine persulfide intermediate. The substrate specificity stretch occupies residues 241 to 247; it reads CGSGVTA.

The protein localises to the cytoplasm. The catalysed reaction is 2-oxo-3-sulfanylpropanoate + [thioredoxin]-dithiol = [thioredoxin]-disulfide + hydrogen sulfide + pyruvate + H(+). Its function is as follows. Catalyzes the transfer of sulfur from 3-mercaptopyruvate to a thiol-containing acceptor to form an intramolecular disulfide releasing hydrogen sulfide and pyruvate. The polypeptide is Probable 3-mercaptopyruvate sulfurtransferase (sseA) (Pseudomonas aeruginosa (strain ATCC 15692 / DSM 22644 / CIP 104116 / JCM 14847 / LMG 12228 / 1C / PRS 101 / PAO1)).